We begin with the raw amino-acid sequence, 205 residues long: Transcriptional regulator GfcR (205 aa).

The protein belongs to the purine/pyrimidine phosphoribosyltransferase family. GfcR subfamily.

This chain is Transcriptional regulator GfcR, found in Methanococcus maripaludis (strain C5 / ATCC BAA-1333).